Reading from the N-terminus, the 97-residue chain is Small ribosomal subunit protein bS20 (97 aa).

Residues 76-85 (RNNGARKKAG) are compositionally biased toward basic residues. A disordered region spans residues 76–97 (RNNGARKKAGLAKALQKVSQAS). Residues 86 to 97 (LAKALQKVSQAS) show a composition bias toward low complexity.

It belongs to the bacterial ribosomal protein bS20 family.

In terms of biological role, binds directly to 16S ribosomal RNA. The sequence is that of Small ribosomal subunit protein bS20 from Microcystis aeruginosa (strain NIES-843 / IAM M-2473).